Reading from the N-terminus, the 55-residue chain is Large ribosomal subunit protein bL33 (55 aa).

This sequence belongs to the bacterial ribosomal protein bL33 family.

This is Large ribosomal subunit protein bL33 from Blochmanniella pennsylvanica (strain BPEN).